The sequence spans 378 residues: uncharacterized protein (378 aa).

The next 11 membrane-spanning stretches (helical) occupy residues 12–34 (SLAF…STFF), 44–66 (VKIY…IFLG), 92–112 (SIAL…LMLI), 132–154 (GFAS…IFLA), 161–180 (EVYA…SIIT), 200–222 (TFLL…IAMM), 235–257 (VEIY…FWGV), 267–285 (VFPL…LFFA), 290–312 (LIFV…RVYI), 327–349 (FLSL…FLFI), and 356–373 (LSAL…FIYL).

Its subcellular location is the cell membrane. This is an uncharacterized protein from Aquifex aeolicus (strain VF5).